Reading from the N-terminus, the 431-residue chain is Trigger factor (431 aa).

The region spanning 158–243 (GDLVAVETWS…VAEVSEPVVP (86 aa)) is the PPIase FKBP-type domain.

This sequence belongs to the FKBP-type PPIase family. Tig subfamily.

Its subcellular location is the cytoplasm. It carries out the reaction [protein]-peptidylproline (omega=180) = [protein]-peptidylproline (omega=0). In terms of biological role, involved in protein export. Acts as a chaperone by maintaining the newly synthesized protein in an open conformation. Functions as a peptidyl-prolyl cis-trans isomerase. This Stenotrophomonas maltophilia (strain K279a) protein is Trigger factor.